A 33-amino-acid polypeptide reads, in one-letter code: Phospholipase A2 homolog BmarPLA2 (33 aa).

The protein belongs to the phospholipase A2 family. Group II subfamily. K49 sub-subfamily. In terms of assembly, homodimer; non-covalently linked. As to expression, expressed by the venom gland.

The protein resides in the secreted. Its function is as follows. Snake phospholipase A2 homolog that lacks enzymatic activity. May display myotoxin activity. In isolated heart decreases cardiac frequency. Also decreases mean arterial pressure. Does not show antimicrobial activity. Does not change renal parameters (such as perfusion pressure, renal vascular resistance, urinary flow, glomerular filtration rate and sodium tubular transport). The chain is Phospholipase A2 homolog BmarPLA2 from Bothrops marajoensis (Marajo lancehead).